Here is a 449-residue protein sequence, read N- to C-terminus: 5'-deoxyadenosine deaminase (449 aa).

Positions 79 and 81 each coordinate Zn(2+). Substrate-binding residues include Glu108 and His200. A Zn(2+)-binding site is contributed by His227. Substrate contacts are provided by Glu230 and Asp316. Asp316 is a Zn(2+) binding site.

Belongs to the metallo-dependent hydrolases superfamily. MTA/SAH deaminase family. As to quaternary structure, homotetramer. The cofactor is Zn(2+).

The catalysed reaction is 5'-deoxyadenosine + H2O + H(+) = 5'-deoxyinosine + NH4(+). It carries out the reaction S-adenosyl-L-homocysteine + H2O + H(+) = S-inosyl-L-homocysteine + NH4(+). The enzyme catalyses S-methyl-5'-thioadenosine + H2O + H(+) = S-methyl-5'-thioinosine + NH4(+). It catalyses the reaction adenosine + H2O + H(+) = inosine + NH4(+). It functions in the pathway amino-acid biosynthesis; S-adenosyl-L-methionine biosynthesis. Functionally, catalyzes the deamination of three SAM-derived enzymatic products, namely 5'-deoxyadenosine, S-adenosyl-L-homocysteine, and 5'-methylthioadenosine, to produce the inosine analogs. Can also deaminate adenosine. The preferred substrate for this enzyme is 5'-deoxyadenosine, but all these substrates are efficiently deaminated. Likely functions in a S-adenosyl-L-methionine (SAM) recycling pathway from S-adenosyl-L-homocysteine (SAH) produced from SAM-dependent methylation reactions. May also be involved in the recycling of 5'-deoxyadenosine, whereupon the 5'-deoxyribose moiety of 5'-deoxyinosine is further metabolized to deoxyhexoses used for the biosynthesis of aromatic amino acids in methanogens. The chain is 5'-deoxyadenosine deaminase from Methanospirillum hungatei JF-1 (strain ATCC 27890 / DSM 864 / NBRC 100397 / JF-1).